The primary structure comprises 502 residues: Cytochrome P450 3A5 (502 aa).

Cysteine 441 contributes to the heme binding site.

Belongs to the cytochrome P450 family. Requires heme as cofactor.

It is found in the endoplasmic reticulum membrane. It localises to the microsome membrane. It catalyses the reaction an organic molecule + reduced [NADPH--hemoprotein reductase] + O2 = an alcohol + oxidized [NADPH--hemoprotein reductase] + H2O + H(+). The catalysed reaction is 17beta-estradiol + reduced [NADPH--hemoprotein reductase] + O2 = 2-hydroxy-17beta-estradiol + oxidized [NADPH--hemoprotein reductase] + H2O + H(+). The enzyme catalyses 17beta-estradiol + reduced [NADPH--hemoprotein reductase] + O2 = 4-hydroxy-17beta-estradiol + oxidized [NADPH--hemoprotein reductase] + H2O + H(+). It carries out the reaction estrone + reduced [NADPH--hemoprotein reductase] + O2 = 2-hydroxyestrone + oxidized [NADPH--hemoprotein reductase] + H2O + H(+). It catalyses the reaction estrone + reduced [NADPH--hemoprotein reductase] + O2 = 4-hydroxyestrone + oxidized [NADPH--hemoprotein reductase] + H2O + H(+). The catalysed reaction is testosterone + reduced [NADPH--hemoprotein reductase] + O2 = 6beta,17beta-dihydroxyandrost-4-en-3-one + oxidized [NADPH--hemoprotein reductase] + H2O + H(+). The enzyme catalyses androst-4-ene-3,17-dione + reduced [NADPH--hemoprotein reductase] + O2 = 6beta-hydroxyandrost-4-ene-3,17-dione + oxidized [NADPH--hemoprotein reductase] + H2O + H(+). It carries out the reaction progesterone + reduced [NADPH--hemoprotein reductase] + O2 = 6beta-hydroxyprogesterone + oxidized [NADPH--hemoprotein reductase] + H2O + H(+). It catalyses the reaction all-trans-retinol + reduced [NADPH--hemoprotein reductase] + O2 = all-trans-retinal + oxidized [NADPH--hemoprotein reductase] + 2 H2O + H(+). The catalysed reaction is all-trans-retinoate + reduced [NADPH--hemoprotein reductase] + O2 = all-trans-4-hydroxyretinoate + oxidized [NADPH--hemoprotein reductase] + H2O + H(+). Its pathway is steroid hormone biosynthesis. It participates in cofactor metabolism; retinol metabolism. A cytochrome P450 monooxygenase involved in the metabolism of steroid hormones and vitamins. Mechanistically, uses molecular oxygen inserting one oxygen atom into a substrate, and reducing the second into a water molecule, with two electrons provided by NADPH via cytochrome P450 reductase (NADPH--hemoprotein reductase). Catalyzes the hydroxylation of carbon-hydrogen bonds. Exhibits high catalytic activity for the formation of catechol estrogens from 17beta-estradiol (E2) and estrone (E1), namely 2-hydroxy E1 and E2. Catalyzes 6beta-hydroxylation of the steroid hormones testosterone, progesterone, and androstenedione. Catalyzes the oxidative conversion of all-trans-retinol to all-trans-retinal, a rate-limiting step for the biosynthesis of all-trans-retinoic acid (atRA). Further metabolizes all trans-retinoic acid (atRA) to 4-hydroxyretinoate and may play a role in hepatic atRA clearance. Also involved in the oxidative metabolism of xenobiotics, including calcium channel blocking drug nifedipine and immunosuppressive drug cyclosporine. The sequence is that of Cytochrome P450 3A5 from Homo sapiens (Human).